The following is a 108-amino-acid chain: ATP synthase peripheral stalk subunit F6, mitochondrial (108 aa).

The N-terminal 32 residues, 1 to 32, are a transit peptide targeting the mitochondrion; it reads MTVQRIFRLSSVLRSAVSVHLRRNIGVTAVAF. K41, K46, and K79 each carry N6-acetyllysine. Residues K84 and K99 each carry the N6-acetyllysine; alternate modification. Residues K84 and K99 each carry the N6-succinyllysine; alternate modification. The residue at position 105 (K105) is an N6-acetyllysine. Phosphoserine is present on S108.

It belongs to the eukaryotic ATPase subunit F6 family. In terms of assembly, component of the ATP synthase complex composed at least of ATP5F1A/subunit alpha, ATP5F1B/subunit beta, ATP5MC1/subunit c (homooctomer), MT-ATP6/subunit a, MT-ATP8/subunit 8, ATP5ME/subunit e, ATP5MF/subunit f, ATP5MG/subunit g, ATP5MK/subunit k, ATP5MJ/subunit j, ATP5F1C/subunit gamma, ATP5F1D/subunit delta, ATP5F1E/subunit epsilon, ATP5PF/subunit F6, ATP5PB/subunit b, ATP5PD/subunit d, ATP5PO/subunit OSCP. ATP synthase complex consists of a soluble F(1) head domain (subunits alpha(3) and beta(3)) - the catalytic core - and a membrane F(0) domain - the membrane proton channel (subunits c, a, 8, e, f, g, k and j). These two domains are linked by a central stalk (subunits gamma, delta, and epsilon) rotating inside the F1 region and a stationary peripheral stalk (subunits F6, b, d, and OSCP).

It localises to the mitochondrion. The protein localises to the mitochondrion inner membrane. Functionally, subunit F6, of the mitochondrial membrane ATP synthase complex (F(1)F(0) ATP synthase or Complex V) that produces ATP from ADP in the presence of a proton gradient across the membrane which is generated by electron transport complexes of the respiratory chain. ATP synthase complex consist of a soluble F(1) head domain - the catalytic core - and a membrane F(1) domain - the membrane proton channel. These two domains are linked by a central stalk rotating inside the F(1) region and a stationary peripheral stalk. During catalysis, ATP synthesis in the catalytic domain of F(1) is coupled via a rotary mechanism of the central stalk subunits to proton translocation. In vivo, can only synthesize ATP although its ATP hydrolase activity can be activated artificially in vitro. Part of the complex F(0) domain. Part of the complex F(0) domain and the peripheric stalk, which acts as a stator to hold the catalytic alpha(3)beta(3) subcomplex and subunit a/ATP6 static relative to the rotary elements. This chain is ATP synthase peripheral stalk subunit F6, mitochondrial, found in Rattus norvegicus (Rat).